Consider the following 134-residue polypeptide: Small ribosomal subunit protein uS8c (134 aa).

It belongs to the universal ribosomal protein uS8 family. Part of the 30S ribosomal subunit.

It is found in the plastid. The protein localises to the chloroplast. One of the primary rRNA binding proteins, it binds directly to 16S rRNA central domain where it helps coordinate assembly of the platform of the 30S subunit. This Lactuca sativa (Garden lettuce) protein is Small ribosomal subunit protein uS8c (rps8).